The chain runs to 372 residues: Glutamate 5-kinase (372 aa).

K14 contacts ATP. The substrate site is built by S55, D142, and N154. ATP is bound by residues 174–175 (SD) and 216–222 (TGGMETK). The PUA domain occupies 279–357 (QGSIIVDLGA…WEIADVLGHK (79 aa)).

This sequence belongs to the glutamate 5-kinase family.

The protein resides in the cytoplasm. The enzyme catalyses L-glutamate + ATP = L-glutamyl 5-phosphate + ADP. It functions in the pathway amino-acid biosynthesis; L-proline biosynthesis; L-glutamate 5-semialdehyde from L-glutamate: step 1/2. Its function is as follows. Catalyzes the transfer of a phosphate group to glutamate to form L-glutamate 5-phosphate. The protein is Glutamate 5-kinase of Carboxydothermus hydrogenoformans (strain ATCC BAA-161 / DSM 6008 / Z-2901).